Here is a 128-residue protein sequence, read N- to C-terminus: Fruiting body differentiation protein 16 (128 aa).

The N-terminal stretch at 1–19 is a signal peptide; the sequence is MLFSHIVFVALSVFGLVQA.

In terms of biological role, plays a role in the regulation of fruiting body development. The protein is Fruiting body differentiation protein 16 of Flammulina velutipes (Agaricus velutipes).